The sequence spans 609 residues: Large ribosomal subunit assembly factor BipA (609 aa).

Residues 3-198 enclose the tr-type G domain; it reads QNIRNIAIIA…AIIKYAPAPN (196 aa). Residues 15 to 20 and 128 to 131 each bind GTP; these read DHGKTT and NKID.

The protein belongs to the TRAFAC class translation factor GTPase superfamily. Classic translation factor GTPase family. BipA subfamily. As to quaternary structure, monomer.

It localises to the cytoplasm. It carries out the reaction GTP + H2O = GDP + phosphate + H(+). Its function is as follows. A 50S ribosomal subunit assembly protein with GTPase activity, required for 50S subunit assembly at low temperatures, may also play a role in translation. Binds GTP and analogs. Binds the 70S ribosome between the 30S and 50S subunits, in a similar position as ribosome-bound EF-G; it contacts a number of ribosomal proteins, both rRNAs and the A-site tRNA. The sequence is that of Large ribosomal subunit assembly factor BipA from Buchnera aphidicola subsp. Schizaphis graminum (strain Sg).